Reading from the N-terminus, the 275-residue chain is Lectin 8 (275 aa).

An N-terminal signal peptide occupies residues 1–31; the sequence is MANSNPKLLVTQNPFSVFLLTFLLLITNVKS. 2 N-linked (GlcNAc...) asparagine glycosylation sites follow: Asn55 and Asn150.

This sequence belongs to the leguminous lectin family.

May be involved in arbuscular mycorrhizal (AM) symbiosis with AM fungi. This is Lectin 8 from Medicago truncatula (Barrel medic).